The sequence spans 137 residues: S-adenosylmethionine decarboxylase proenzyme (137 aa).

Catalysis depends on Ser63, which acts as the Schiff-base intermediate with substrate; via pyruvic acid. The residue at position 63 (Ser63) is a Pyruvic acid (Ser); by autocatalysis. Residue His68 is the Proton acceptor; for processing activity of the active site. Catalysis depends on Cys83, which acts as the Proton donor; for catalytic activity.

Belongs to the prokaryotic AdoMetDC family. Type 1 subfamily. Heterotetramer of two alpha and two beta chains arranged as a dimer of alpha/beta heterodimers. The cofactor is pyruvate. In terms of processing, is synthesized initially as an inactive proenzyme. Formation of the active enzyme involves a self-maturation process in which the active site pyruvoyl group is generated from an internal serine residue via an autocatalytic post-translational modification. Two non-identical subunits are generated from the proenzyme in this reaction, and the pyruvate is formed at the N-terminus of the alpha chain, which is derived from the carboxyl end of the proenzyme. The post-translation cleavage follows an unusual pathway, termed non-hydrolytic serinolysis, in which the side chain hydroxyl group of the serine supplies its oxygen atom to form the C-terminus of the beta chain, while the remainder of the serine residue undergoes an oxidative deamination to produce ammonia and the pyruvoyl group blocking the N-terminus of the alpha chain.

The catalysed reaction is S-adenosyl-L-methionine + H(+) = S-adenosyl 3-(methylsulfanyl)propylamine + CO2. The protein operates within amine and polyamine biosynthesis; S-adenosylmethioninamine biosynthesis; S-adenosylmethioninamine from S-adenosyl-L-methionine: step 1/1. Functionally, catalyzes the decarboxylation of S-adenosylmethionine to S-adenosylmethioninamine (dcAdoMet), the propylamine donor required for the synthesis of the polyamines spermine and spermidine from the diamine putrescine. This is S-adenosylmethionine decarboxylase proenzyme from Fervidobacterium nodosum (strain ATCC 35602 / DSM 5306 / Rt17-B1).